The primary structure comprises 318 residues: Cytochrome f (318 aa).

The first 33 residues, 1-33 (MKNTFSWIKKEITRSISLSLMIYIITRTSISNA), serve as a signal peptide directing secretion. Heme contacts are provided by tyrosine 34, cysteine 54, cysteine 57, and histidine 58. Residues 284–304 (VQGLLFFLASVILAQIFLVLK) form a helical membrane-spanning segment.

This sequence belongs to the cytochrome f family. The 4 large subunits of the cytochrome b6-f complex are cytochrome b6, subunit IV (17 kDa polypeptide, petD), cytochrome f and the Rieske protein, while the 4 small subunits are PetG, PetL, PetM and PetN. The complex functions as a dimer. Heme serves as cofactor.

It is found in the plastid. The protein resides in the chloroplast thylakoid membrane. Component of the cytochrome b6-f complex, which mediates electron transfer between photosystem II (PSII) and photosystem I (PSI), cyclic electron flow around PSI, and state transitions. This Oenothera biennis (German evening primrose) protein is Cytochrome f.